A 477-amino-acid polypeptide reads, in one-letter code: MGNVPLLREVGKCQRNMFGRSTASSKGSSNSRSSSSTSPKKGPRREADALMFIQIFIHLLKSNIGTGFLGLPLAVKNAGLLVGPVSLLAIGALTVHCMDILLNCACHLTQRLQRSFVNYEETTMYSLETCPSPWLRTHSVWGRYVVSFLLIVTQLGFCSVYFMFLADNLQQIMEEAHFTSNVCQPRQSLVMTSILDTRFYMLTILPFLILLVLIQNPQVLSIFSTLATITTLSSLALIFEYLIQTPHHSNLPLVANWKTFLLFFGTAIFTFEGVGMVLPLKSQMKSPQQFPAVLYLGMSFVIFLYICLGTLGYMKFGTDTQASITLNLPICWLYQSVKLMYSVGIFFTYALQFHVPAEIIVPYVVSRVSENWALFVDLTVRTALVCLTCFSAVLIPRLDLVISLVGSVSSSALAIIIPPLLEIATFYSENISCATIVKDIMISILGLLGCVLGTYQALYEMTQQTHFYMANSTRVHI.

Topologically, residues 1-54 (MGNVPLLREVGKCQRNMFGRSTASSKGSSNSRSSSSTSPKKGPRREADALMFIQ) are cytoplasmic. Low complexity predominate over residues 19–40 (GRSTASSKGSSNSRSSSSTSPK). The segment at 19 to 43 (GRSTASSKGSSNSRSSSSTSPKKGP) is disordered. The helical transmembrane segment at 55 to 75 (IFIHLLKSNIGTGFLGLPLAV) threads the bilayer. The Extracellular portion of the chain corresponds to 76–77 (KN). The helical transmembrane segment at 78–98 (AGLLVGPVSLLAIGALTVHCM) threads the bilayer. At 99-144 (DILLNCACHLTQRLQRSFVNYEETTMYSLETCPSPWLRTHSVWGRY) the chain is on the cytoplasmic side. The chain crosses the membrane as a helical span at residues 145–165 (VVSFLLIVTQLGFCSVYFMFL). At 166 to 202 (ADNLQQIMEEAHFTSNVCQPRQSLVMTSILDTRFYML) the chain is on the extracellular side. Residues 203 to 223 (TILPFLILLVLIQNPQVLSIF) traverse the membrane as a helical segment. Residues 224–225 (ST) are Cytoplasmic-facing. The chain crosses the membrane as a helical span at residues 226–246 (LATITTLSSLALIFEYLIQTP). Over 247-259 (HHSNLPLVANWKT) the chain is Extracellular. Residues 260-280 (FLLFFGTAIFTFEGVGMVLPL) form a helical membrane-spanning segment. The Cytoplasmic segment spans residues 281-291 (KSQMKSPQQFP). The chain crosses the membrane as a helical span at residues 292–312 (AVLYLGMSFVIFLYICLGTLG). The Extracellular segment spans residues 313–344 (YMKFGTDTQASITLNLPICWLYQSVKLMYSVG). Residues 345 to 365 (IFFTYALQFHVPAEIIVPYVV) form a helical membrane-spanning segment. Over 366–374 (SRVSENWAL) the chain is Cytoplasmic. The helical transmembrane segment at 375–395 (FVDLTVRTALVCLTCFSAVLI) threads the bilayer. The Extracellular portion of the chain corresponds to 396–399 (PRLD). The chain crosses the membrane as a helical span at residues 400–420 (LVISLVGSVSSSALAIIIPPL). Residues 421–432 (LEIATFYSENIS) are Cytoplasmic-facing. Residues 433–453 (CATIVKDIMISILGLLGCVLG) traverse the membrane as a helical segment. Over 454–477 (TYQALYEMTQQTHFYMANSTRVHI) the chain is Extracellular.

It belongs to the amino acid/polyamine transporter 2 family. As to expression, specifically expressed in testis.

It localises to the membrane. In Mus musculus (Mouse), this protein is Proton-coupled amino acid transporter 3 (Slc36a3).